Reading from the N-terminus, the 252-residue chain is Probable transcriptional regulatory protein Haur_3030 (252 aa).

The protein belongs to the TACO1 family.

Its subcellular location is the cytoplasm. This is Probable transcriptional regulatory protein Haur_3030 from Herpetosiphon aurantiacus (strain ATCC 23779 / DSM 785 / 114-95).